The following is a 135-amino-acid chain: uncharacterized protein (135 aa).

The HotDog ACOT-type domain occupies 8–123 (PQGTIVLKTL…IFIYVAIDET (116 aa)).

Belongs to the acyl coenzyme A hydrolase family.

This is an uncharacterized protein from Buchnera aphidicola subsp. Schizaphis graminum (strain Sg).